A 238-amino-acid polypeptide reads, in one-letter code: Major prion protein (238 aa).

The first 15 residues, 1–15, serve as a signal peptide directing secretion; that stretch reads MLVLFVATWSDLGLC. Residues 16–215 form an interaction with GRB2, ERI3 and SYN1 region; sequence KKRPKPGGWN…ESQAYYQRGS (200 aa). The interval 18-93 is disordered; the sequence is RPKPGGWNTG…WHKPSKPKTS (76 aa). Repeat copies occupy residues 44–52, 53–60, 61–68, and 69–76. The tract at residues 44 to 76 is 4 X 8 AA tandem repeats of P-H-G-G-G-W-G-Q; sequence PQGGGGWGQPHGGGWGQPHGGGWGQPHGGGWGQ. The segment covering 45–80 has biased composition (gly residues); the sequence is QGGGGWGQPHGGGWGQPHGGGWGQPHGGGWGQGGGT. Residues G47, G48, H54, G55, G56, H62, G63, G64, H70, G71, and G72 each contribute to the Cu(2+) site. Over residues 83–93 the composition is skewed to basic residues; that stretch reads QWHKPSKPKTS. A disulfide bond links C164 and C199. N-linked (GlcNAc...) asparagine glycosylation is found at N166 and N182. Residue S215 is the site of GPI-anchor amidated serine attachment. A propeptide spans 216-238 (removed in mature form); the sequence is SMVLFSSPPVILLISFLIFLIVG.

The protein belongs to the prion family. In terms of assembly, monomer and homodimer. Has a tendency to aggregate into amyloid fibrils containing a cross-beta spine, formed by a steric zipper of superposed beta-strands. Soluble oligomers may represent an intermediate stage on the path to fibril formation. Copper binding may promote oligomerization. Interacts with GRB2, APP, ERI3/PRNPIP and SYN1. Mislocalized cytosolically exposed PrP interacts with MGRN1; this interaction alters MGRN1 subcellular location and causes lysosomal enlargement. Interacts with KIAA1191.

The protein localises to the cell membrane. It is found in the golgi apparatus. Functionally, its primary physiological function is unclear. Has cytoprotective activity against internal or environmental stresses. May play a role in neuronal development and synaptic plasticity. May be required for neuronal myelin sheath maintenance. May play a role in iron uptake and iron homeostasis. Soluble oligomers are toxic to cultured neuroblastoma cells and induce apoptosis (in vitro). Association with GPC1 (via its heparan sulfate chains) targets PRNP to lipid rafts. Also provides Cu(2+) or Zn(2+) for the ascorbate-mediated GPC1 deaminase degradation of its heparan sulfate side chains. The sequence is that of Major prion protein (PRNP) from Macaca sylvanus (Barbary macaque).